The chain runs to 682 residues: UvrABC system protein B (682 aa).

One can recognise a Helicase ATP-binding domain in the interval Asp27–Ile414. Gly40–Thr47 is an ATP binding site. The short motif at Tyr93–Ile116 is the Beta-hairpin element. The 163-residue stretch at Gln432–Leu594 folds into the Helicase C-terminal domain. The segment at Ala609–Ala628 is disordered. A UVR domain is found at Gly642–Arg677.

It belongs to the UvrB family. In terms of assembly, forms a heterotetramer with UvrA during the search for lesions. Interacts with UvrC in an incision complex.

Its subcellular location is the cytoplasm. Functionally, the UvrABC repair system catalyzes the recognition and processing of DNA lesions. A damage recognition complex composed of 2 UvrA and 2 UvrB subunits scans DNA for abnormalities. Upon binding of the UvrA(2)B(2) complex to a putative damaged site, the DNA wraps around one UvrB monomer. DNA wrap is dependent on ATP binding by UvrB and probably causes local melting of the DNA helix, facilitating insertion of UvrB beta-hairpin between the DNA strands. Then UvrB probes one DNA strand for the presence of a lesion. If a lesion is found the UvrA subunits dissociate and the UvrB-DNA preincision complex is formed. This complex is subsequently bound by UvrC and the second UvrB is released. If no lesion is found, the DNA wraps around the other UvrB subunit that will check the other stand for damage. The protein is UvrABC system protein B of Oleidesulfovibrio alaskensis (strain ATCC BAA-1058 / DSM 17464 / G20) (Desulfovibrio alaskensis).